The primary structure comprises 453 residues: Pup--protein ligase (453 aa).

Residue glutamate 9 coordinates Mg(2+). Arginine 53 lines the ATP pocket. Tyrosine 55 serves as a coordination point for Mg(2+). The Proton acceptor role is filled by aspartate 57. Glutamate 63 is a binding site for Mg(2+). Residues threonine 66 and tryptophan 420 each coordinate ATP.

The protein belongs to the Pup ligase/Pup deamidase family. Pup-conjugating enzyme subfamily.

It catalyses the reaction ATP + [prokaryotic ubiquitin-like protein]-L-glutamate + [protein]-L-lysine = ADP + phosphate + N(6)-([prokaryotic ubiquitin-like protein]-gamma-L-glutamyl)-[protein]-L-lysine.. The protein operates within protein degradation; proteasomal Pup-dependent pathway. It functions in the pathway protein modification; protein pupylation. Its function is as follows. Catalyzes the covalent attachment of the prokaryotic ubiquitin-like protein modifier Pup to the proteasomal substrate proteins, thereby targeting them for proteasomal degradation. This tagging system is termed pupylation. The ligation reaction involves the side-chain carboxylate of the C-terminal glutamate of Pup and the side-chain amino group of a substrate lysine. This Streptomyces scabiei (strain 87.22) protein is Pup--protein ligase.